A 1407-amino-acid chain; its full sequence is DNA-directed RNA polymerase subunit beta' (1407 aa).

Positions 70, 72, 85, and 88 each coordinate Zn(2+). Mg(2+) contacts are provided by aspartate 460, aspartate 462, and aspartate 464. Residues cysteine 814, cysteine 888, cysteine 895, and cysteine 898 each contribute to the Zn(2+) site.

Belongs to the RNA polymerase beta' chain family. The RNAP catalytic core consists of 2 alpha, 1 beta, 1 beta' and 1 omega subunit. When a sigma factor is associated with the core the holoenzyme is formed, which can initiate transcription. Mg(2+) is required as a cofactor. Requires Zn(2+) as cofactor.

The enzyme catalyses RNA(n) + a ribonucleoside 5'-triphosphate = RNA(n+1) + diphosphate. Its function is as follows. DNA-dependent RNA polymerase catalyzes the transcription of DNA into RNA using the four ribonucleoside triphosphates as substrates. This is DNA-directed RNA polymerase subunit beta' from Salmonella choleraesuis (strain SC-B67).